The sequence spans 777 residues: Ral guanine nucleotide dissociation stimulator-like 2 (777 aa).

Residues 1 to 54 form a disordered region; that stretch reads MLPRPLRLLLDTSPPGGVVLSSFRSRDPEEGGGPGGLVVGGGQEEEEEEEEEAP. Serine 13 carries the post-translational modification Phosphoserine. Gly residues predominate over residues 31–42; sequence GGGPGGLVVGGG. Residues 43–54 are compositionally biased toward acidic residues; it reads QEEEEEEEEEAP. The N-terminal Ras-GEF domain occupies 88–212; that stretch reads SSRRLRAGTL…GSADLIRNLR (125 aa). A Ras-GEF domain is found at 243–513; it reads LADHLAEQLT…HRVSCEVEPP (271 aa). A Phosphoserine modification is found at serine 409. Composition is skewed to low complexity over residues 581–610 and 618–632; these read SLDS…SPRP and ASCG…EEAS. 2 disordered regions span residues 581-644 and 734-766; these read SLDS…GSGP and RRSS…PRIK. Positions 633 to 644 are enriched in gly residues; the sequence is GGTGYGGEGSGP. The Ras-associating domain occupies 648–735; it reads DCRIIRVQME…HDFLLRQRRR (88 aa). The segment covering 740–755 has biased composition (low complexity); that stretch reads TPGVTSGPSASGTPPS.

In terms of assembly, interacts with SAMD9.

Probable guanine nucleotide exchange factor. Putative effector of Ras and/or Rap. Associates with the GTP-bound form of Rap 1A and H-Ras in vitro. The protein is Ral guanine nucleotide dissociation stimulator-like 2 (RGL2) of Homo sapiens (Human).